Reading from the N-terminus, the 357-residue chain is CRISPR system Cms protein Csm5 (357 aa).

It belongs to the CRISPR-associated Csm5 family. In terms of assembly, part of the Csm effector complex that includes at least Cas10(1), Csm2(3), Csm3(5), Csm4(1), Csm5(1) and mature crRNA. The Csm complex is elongated and slightly twisted with a maximal length of 215 Angstroms and a diameter of 75-80 Angstroms. It has been modeled to have a central protein filamant of Csm3 subunits along which the dsRNA helix of paired crRNA and target RNA binds. The filament is capped at one end by Cas10 and Csm4 and at the other end by Csm5; ssDNA is thought to bind to the N-terminal HD domain of Cas10. Csm with a precursor crRNA does not include Csm5, while Cas6, the enzyme probably involved in pre-crRNA processing, is found associated with a subset of the Csm complex.

In terms of biological role, CRISPR (clustered regularly interspaced short palindromic repeat) is an adaptive immune system that provides protection against mobile genetic elements (viruses, transposable elements and conjugative plasmids). CRISPR clusters contain spacers, sequences complementary to antecedent mobile elements, and target invading nucleic acids. CRISPR clusters are transcribed and processed into CRISPR RNA (crRNA). The type III-A Csm effector complex binds crRNA and acts as a crRNA-guided RNase, DNase and cyclic oligoadenylate synthase; binding of target RNA cognate to the crRNA is required for all activities. In a heterologous host this Csm effector complex restricts ssRNA phage MS2, suggesting it may target RNA viruses in vivo. Its function is as follows. Csm functions as a non-specific ssDNase. Base-pairing between crRNA and target RNA to form a ternary Csm complex activates a ssDNase activity; target RNA cleavage suppresses the ssDNase, a temporal control that prevents uncontrolled DNA degradation. Viral RNA transcripts probably tether the Csm complex to the viral genome, recruiting Cas10 ssDNA activity which is able to degrade DNA in the transcription bubble, spatially controlling the DNase activity. Functionally, this subunit might be involved in maturation of a crRNA intermediate to its mature form. The polypeptide is CRISPR system Cms protein Csm5 (Streptococcus thermophilus).